Reading from the N-terminus, the 460-residue chain is MLSIYNTLTKSKEVFKPLDGNKVRMYVCGMTVYDYCHLGHGRSMVAFDLVTRWLRFSGYELTYVRNITDIDDKIINRARDNGESFDALTARMIDAMHEDEARLNILKPDMEPRATDHIAGMHAMIQTLIDKGYAYAPGNGDVYYRVGKFQGYGKLSRKKIEDLRIGARIEVDESKEDPLDFVLWKGVKPGEPSWESPWGAGRPGWHIECSVMSTCCLGDTFDIHGGGSDLEFPHHENEIAQSEAATGKTYANAWLHCGMIRINGEKMSKSLNNFFTIRDVLEKYHPEVVRYLLVSSHYRSAINYSEDSLRESKAALERFYHALKGLPVAEPAGGEAFVERFSTAMNDDFGTPEACAVLFEMVREINRLRESDVTAAAGLAARLKQLASVLGVLQLEADDFLRAGAEGRVDAAQVEALIQARLAARAAKDWAESDRIRDQITAMGVLLEDGKGGTTWRLAD.

Position 28 (Cys-28) interacts with Zn(2+). The 'HIGH' region motif lies at 30–40; that stretch reads MTVYDYCHLGH. Residues Cys-209, His-234, and Glu-238 each coordinate Zn(2+). The 'KMSKS' region motif lies at 266-270; that stretch reads KMSKS. Lys-269 serves as a coordination point for ATP.

The protein belongs to the class-I aminoacyl-tRNA synthetase family. Monomer. It depends on Zn(2+) as a cofactor.

It is found in the cytoplasm. The enzyme catalyses tRNA(Cys) + L-cysteine + ATP = L-cysteinyl-tRNA(Cys) + AMP + diphosphate. The protein is Cysteine--tRNA ligase of Pseudomonas savastanoi pv. phaseolicola (strain 1448A / Race 6) (Pseudomonas syringae pv. phaseolicola (strain 1448A / Race 6)).